Here is a 384-residue protein sequence, read N- to C-terminus: Dual-specificity RNA methyltransferase RlmN (384 aa).

The active-site Proton acceptor is Glu105. The region spanning 111–350 (EDDRATLCVS…TIVRKTRGDD (240 aa)) is the Radical SAM core domain. A disulfide bond links Cys118 and Cys355. Residues Cys125, Cys129, and Cys132 each coordinate [4Fe-4S] cluster. S-adenosyl-L-methionine contacts are provided by residues 179–180 (GE), Ser211, 233–235 (SLH), and Asn312. Cys355 serves as the catalytic S-methylcysteine intermediate.

It belongs to the radical SAM superfamily. RlmN family. It depends on [4Fe-4S] cluster as a cofactor.

The protein localises to the cytoplasm. It catalyses the reaction adenosine(2503) in 23S rRNA + 2 reduced [2Fe-2S]-[ferredoxin] + 2 S-adenosyl-L-methionine = 2-methyladenosine(2503) in 23S rRNA + 5'-deoxyadenosine + L-methionine + 2 oxidized [2Fe-2S]-[ferredoxin] + S-adenosyl-L-homocysteine. The enzyme catalyses adenosine(37) in tRNA + 2 reduced [2Fe-2S]-[ferredoxin] + 2 S-adenosyl-L-methionine = 2-methyladenosine(37) in tRNA + 5'-deoxyadenosine + L-methionine + 2 oxidized [2Fe-2S]-[ferredoxin] + S-adenosyl-L-homocysteine. Functionally, specifically methylates position 2 of adenine 2503 in 23S rRNA and position 2 of adenine 37 in tRNAs. m2A2503 modification seems to play a crucial role in the proofreading step occurring at the peptidyl transferase center and thus would serve to optimize ribosomal fidelity. This Escherichia coli O17:K52:H18 (strain UMN026 / ExPEC) protein is Dual-specificity RNA methyltransferase RlmN.